The primary structure comprises 306 residues: tRNA pseudouridine synthase B (306 aa).

The active-site Nucleophile is the D43.

The protein belongs to the pseudouridine synthase TruB family. Type 1 subfamily.

It catalyses the reaction uridine(55) in tRNA = pseudouridine(55) in tRNA. Responsible for synthesis of pseudouridine from uracil-55 in the psi GC loop of transfer RNAs. The sequence is that of tRNA pseudouridine synthase B from Heliobacterium modesticaldum (strain ATCC 51547 / Ice1).